Reading from the N-terminus, the 500-residue chain is L-arabinose isomerase (500 aa).

Mn(2+)-binding residues include Glu-306, Glu-333, His-349, and His-448.

The protein belongs to the arabinose isomerase family. Requires Mn(2+) as cofactor.

It carries out the reaction beta-L-arabinopyranose = L-ribulose. The protein operates within carbohydrate degradation; L-arabinose degradation via L-ribulose; D-xylulose 5-phosphate from L-arabinose (bacterial route): step 1/3. Its function is as follows. Catalyzes the conversion of L-arabinose to L-ribulose. The polypeptide is L-arabinose isomerase (Shewanella sp. (strain MR-4)).